The sequence spans 1201 residues: DNA-directed RNA polymerase subunit beta (1201 aa).

Residues 1165-1201 are disordered; the sequence is DALSKFKQQQDEKAADKAAKADAAKPSETTNAQQDNQ. The segment covering 1172–1189 has biased composition (basic and acidic residues); that stretch reads QQQDEKAADKAAKADAAK. A compositionally biased stretch (polar residues) spans 1191 to 1201; that stretch reads SETTNAQQDNQ.

The protein belongs to the RNA polymerase beta chain family. In terms of assembly, the RNAP catalytic core consists of 2 alpha, 1 beta, 1 beta' and 1 omega subunit. When a sigma factor is associated with the core the holoenzyme is formed, which can initiate transcription.

The enzyme catalyses RNA(n) + a ribonucleoside 5'-triphosphate = RNA(n+1) + diphosphate. DNA-dependent RNA polymerase catalyzes the transcription of DNA into RNA using the four ribonucleoside triphosphates as substrates. The sequence is that of DNA-directed RNA polymerase subunit beta from Lactiplantibacillus plantarum (strain ATCC BAA-793 / NCIMB 8826 / WCFS1) (Lactobacillus plantarum).